Here is a 677-residue protein sequence, read N- to C-terminus: DNA ligase (677 aa).

NAD(+)-binding positions include 38–42 (DYDFD), 87–88 (SL), and E121. K123 serves as the catalytic N6-AMP-lysine intermediate. Residues R144, E187, K300, and K324 each contribute to the NAD(+) site. Positions 418, 421, 436, and 442 each coordinate Zn(2+). A BRCT domain is found at 601–677 (LINSNFEGLS…ISEEEFEAML (77 aa)).

The protein belongs to the NAD-dependent DNA ligase family. LigA subfamily. Requires Mg(2+) as cofactor. Mn(2+) is required as a cofactor.

It catalyses the reaction NAD(+) + (deoxyribonucleotide)n-3'-hydroxyl + 5'-phospho-(deoxyribonucleotide)m = (deoxyribonucleotide)n+m + AMP + beta-nicotinamide D-nucleotide.. Its function is as follows. DNA ligase that catalyzes the formation of phosphodiester linkages between 5'-phosphoryl and 3'-hydroxyl groups in double-stranded DNA using NAD as a coenzyme and as the energy source for the reaction. It is essential for DNA replication and repair of damaged DNA. This is DNA ligase from Chlorobium luteolum (strain DSM 273 / BCRC 81028 / 2530) (Pelodictyon luteolum).